The primary structure comprises 162 residues: Disulfide bond formation protein B (162 aa).

Topologically, residues 1–4 (MRII) are cytoplasmic. A helical membrane pass occupies residues 5-21 (FLLIFLACAGLIGYALY). At 22–39 (LQLMDGLLPCPLCIFQRI) the chain is on the periplasmic side. C31 and C34 are disulfide-bonded. The helical transmembrane segment at 40–56 (AYWLIGITALFTFIHNP) threads the bilayer. Residues 57-62 (QSLGQH) lie on the Cytoplasmic side of the membrane. Residues 63-80 (IYYGLIILFSLAGAIVAG) form a helical membrane-spanning segment. The Periplasmic segment spans residues 81 to 136 (RQAWLIRFPEAFECGISPEEAFLNGLPLAQWWPNMFEANGDCNDGTWQFLSLTLPD). Cysteines 94 and 122 form a disulfide. Residues 137 to 155 (WSLLIFAAFGIIAGLLWHK) traverse the membrane as a helical segment. At 156–162 (KYNSINQ) the chain is on the cytoplasmic side.

Belongs to the DsbB family.

The protein localises to the cell inner membrane. Functionally, required for disulfide bond formation in some periplasmic proteins. Acts by oxidizing the DsbA protein. This chain is Disulfide bond formation protein B, found in Nitrosomonas eutropha (strain DSM 101675 / C91 / Nm57).